Consider the following 204-residue polypeptide: FMN-dependent NADH:quinone oxidoreductase 1 (204 aa).

FMN is bound by residues Ser10 and 15-17 (SLS).

This sequence belongs to the azoreductase type 1 family. As to quaternary structure, homodimer. FMN serves as cofactor.

The enzyme catalyses 2 a quinone + NADH + H(+) = 2 a 1,4-benzosemiquinone + NAD(+). It catalyses the reaction N,N-dimethyl-1,4-phenylenediamine + anthranilate + 2 NAD(+) = 2-(4-dimethylaminophenyl)diazenylbenzoate + 2 NADH + 2 H(+). Its function is as follows. Quinone reductase that provides resistance to thiol-specific stress caused by electrophilic quinones. In terms of biological role, also exhibits azoreductase activity. Catalyzes the reductive cleavage of the azo bond in aromatic azo compounds to the corresponding amines. The sequence is that of FMN-dependent NADH:quinone oxidoreductase 1 from Rhizobium etli (strain ATCC 51251 / DSM 11541 / JCM 21823 / NBRC 15573 / CFN 42).